A 380-amino-acid polypeptide reads, in one-letter code: Acyl-coenzyme A diphosphatase NUDT19 (380 aa).

In terms of domain architecture, Nudix hydrolase spans 8 to 264; it reads WKEAATLIVA…KIWIPPPQFY (257 aa). Positions 115-136 match the Nudix box motif; the sequence is SLIPGEVATRICAIRETFEESG. Residues Glu130 and Glu134 each coordinate Mg(2+). A Microbody targeting signal motif is present at residues 378–380; it reads NKL.

The protein belongs to the Nudix hydrolase family. As to quaternary structure, monomer. Requires Mg(2+) as cofactor. The cofactor is Mn(2+).

The protein localises to the peroxisome. It catalyses the reaction an acyl-CoA + H2O = an acyl-4'-phosphopantetheine + adenosine 3',5'-bisphosphate + 2 H(+). The enzyme catalyses CoA + H2O = (R)-4'-phosphopantetheine + adenosine 3',5'-bisphosphate + 2 H(+). It carries out the reaction hexanoyl-CoA + H2O = hexanoyl-4'-phosphopantetheine + adenosine 3',5'-bisphosphate + 2 H(+). The catalysed reaction is octanoyl-CoA + H2O = S-octanoyl-4'-phosphopantetheine + adenosine 3',5'-bisphosphate + 2 H(+). It catalyses the reaction butanoyl-CoA + H2O = S-butanoyl-4'-phosphopantetheine + adenosine 3',5'-bisphosphate + 2 H(+). The enzyme catalyses propanoyl-CoA + H2O = propanoyl-4'-phosphopantetheine + adenosine 3',5'-bisphosphate + 2 H(+). It carries out the reaction malonyl-CoA + H2O = malonyl-4'-phosphopantetheine + adenosine 3',5'-bisphosphate + 2 H(+). The catalysed reaction is succinyl-CoA + H2O = succinyl-4'-phosphopantetheine + adenosine 3',5'-bisphosphate + 2 H(+). It catalyses the reaction choloyl-CoA + H2O = S-choloyl-4'-phosphopantetheine + adenosine 3',5'-bisphosphate + 2 H(+). The enzyme catalyses 4,8-dimethylnonanoyl-CoA + H2O = S-(4,8-dimethylnonanoyl)-4'-phosphopantetheine + adenosine 3',5'-bisphosphate + 2 H(+). It carries out the reaction (9Z,12Z,15Z)-octadecatrienoyl-CoA + H2O = S-(9Z,12Z,15Z-octadecatrienoyl)-4'-phosphopantetheine + adenosine 3',5'-bisphosphate + 2 H(+). The catalysed reaction is (9Z,12Z)-octadecadienoyl-CoA + H2O = S-(9Z,12Z-octadecadienoyl)-4'-phosphopantetheine + adenosine 3',5'-bisphosphate + 2 H(+). It catalyses the reaction (9Z)-hexadecenoyl-CoA + H2O = S-(9Z-hexadecenoyl)-4'-phosphopantetheine + adenosine 3',5'-bisphosphate + 2 H(+). The enzyme catalyses (9Z)-tetradecenoyl-CoA + H2O = S-(9Z-tetradecenoyl)-4'-phosphopantetheine + adenosine 3',5'-bisphosphate + 2 H(+). It carries out the reaction (6Z)-octenoyl-CoA + H2O = S-(6Z-octenoyl)-4'-phosphopantetheine + adenosine 3',5'-bisphosphate + 2 H(+). The catalysed reaction is hexadecanoyl-CoA + H2O = S-hexadecanoyl-4'-phosphopantetheine + adenosine 3',5'-bisphosphate + 2 H(+). It catalyses the reaction tetradecanoyl-CoA + H2O = tetradecanoyl-4'-phosphopantetheine + adenosine 3',5'-bisphosphate + 2 H(+). The enzyme catalyses dodecanoyl-CoA + H2O = S-dodecanoyl-4'-phosphopantetheine + adenosine 3',5'-bisphosphate + 2 H(+). It carries out the reaction a 5'-end CoA-ribonucleoside in mRNA + H2O = a 5'-end phospho-adenosine-phospho-ribonucleoside in mRNA + (R)-4'-phosphopantetheine + 2 H(+). In terms of biological role, fatty acyl-coenzyme A (CoA) diphosphatase that hydrolyzes fatty acyl-CoA to yield acyl-4'-phosphopantetheine and adenosine 3',5'-bisphosphate. Mediates the hydrolysis of a wide range of CoA esters, including choloyl-CoA and branched-chain fatty-acyl-CoA esters and at low substrate concentrations medium and long-chain fatty-acyl-CoA esters are the primary substrates. Highest activity seen with medium-chain acyl-CoA esters and higher rates of activity seen with the unsaturated acyl-CoA esters compared with the saturated esters. Exhibits decapping activity towards dpCoA-capped RNAs in vitro. In Xenopus laevis (African clawed frog), this protein is Acyl-coenzyme A diphosphatase NUDT19 (nudt19).